The chain runs to 272 residues: Serine/arginine-rich splicing factor 5 (272 aa).

Positions 4–74 constitute an RRM 1 domain; it reads CRVFIGRLNP…ERVTIEHARA (71 aa). The disordered stretch occupies residues 73–105; sequence RARSRGGRGRGRYSDRFSSRRPRNDRRNAPPVR. Residues 74 to 83 are compositionally biased toward basic residues; it reads ARSRGGRGRG. Serine 86 carries the post-translational modification Phosphoserine. Residues 108-181 form the RRM 2 domain; the sequence is NRLIVENLSS…RKIKLIEGSK (74 aa). Lysine 167 is subject to N6-acetyllysine. Residues 174–272 form a disordered region; sequence IKLIEGSKRH…SRSRSVDSGN (99 aa). The segment covering 182–229 has biased composition (basic residues); the sequence is RHSRSRSRSRSRTRSSSRSRSRSRSRSRKSYSRSRSRSRSRSRSKSRS. Phosphoserine occurs at positions 227, 229, 233, 250, and 253. Residues 242 to 254 are compositionally biased toward low complexity; the sequence is RGSSSRSKSPASV.

Belongs to the splicing factor SR family. Interacts (via RS domain) with PHF5A (via N-terminus). Found in a pre-mRNA splicing complex with SRSF4/SFRS4, SRSF5/SFRS5, SNRNP70, SNRPA1, SRRM1 and SRRM2. Extensively phosphorylated on serine residues in the RS domain.

It localises to the nucleus. Functionally, plays a role in constitutive splicing and can modulate the selection of alternative splice sites. In Homo sapiens (Human), this protein is Serine/arginine-rich splicing factor 5 (SRSF5).